We begin with the raw amino-acid sequence, 256 residues long: Thiazole synthase (256 aa).

The active-site Schiff-base intermediate with DXP is Lys96. Residues Gly157, 183-184 (AG), and 205-206 (NT) contribute to the 1-deoxy-D-xylulose 5-phosphate site.

It belongs to the ThiG family. Homotetramer. Forms heterodimers with either ThiH or ThiS.

The protein localises to the cytoplasm. The enzyme catalyses [ThiS sulfur-carrier protein]-C-terminal-Gly-aminoethanethioate + 2-iminoacetate + 1-deoxy-D-xylulose 5-phosphate = [ThiS sulfur-carrier protein]-C-terminal Gly-Gly + 2-[(2R,5Z)-2-carboxy-4-methylthiazol-5(2H)-ylidene]ethyl phosphate + 2 H2O + H(+). Its pathway is cofactor biosynthesis; thiamine diphosphate biosynthesis. In terms of biological role, catalyzes the rearrangement of 1-deoxy-D-xylulose 5-phosphate (DXP) to produce the thiazole phosphate moiety of thiamine. Sulfur is provided by the thiocarboxylate moiety of the carrier protein ThiS. In vitro, sulfur can be provided by H(2)S. This is Thiazole synthase from Clostridioides difficile (strain 630) (Peptoclostridium difficile).